We begin with the raw amino-acid sequence, 193 residues long: Cysteine and glycine-rich protein 1 (193 aa).

One can recognise an LIM zinc-binding 1 domain in the interval 10 to 61; that stretch reads CGVCQKTVYFAEEVQCEGNSFHKSCFLCMVCKKNLDSTTVAVHGEEIYCKSC. Positions 64–69 match the Nuclear localization signal motif; sequence KKYGPK. Ser-81 bears the Phosphoserine mark. Lys-84 carries the post-translational modification N6-acetyllysine. A Glycyl lysine isopeptide (Lys-Gly) (interchain with G-Cter in SUMO2) cross-link involves residue Lys-91. Residues Lys-112, Lys-131, Lys-137, and Lys-161 each carry the N6-acetyllysine modification. One can recognise an LIM zinc-binding 2 domain in the interval 119-170; that stretch reads CPRCSQAVYAAEKVIGAGKSWHKSCFRCAKCGKGLESTTLADKDGEIYCKGC. A Phosphoserine modification is found at Ser-192.

Interacts with ASCC1; ASCC2 and TRIP4.

It localises to the nucleus. Could play a role in neuronal development. This chain is Cysteine and glycine-rich protein 1 (Csrp1), found in Mus musculus (Mouse).